Consider the following 625-residue polypeptide: MSDDETLADVRIVLIGDEGCGKTSLVMSLLEDEWVDAVPRRLDRVLIPADVTPENVTTSIVDLSIKEEDENWIVSEIRQANVICVVYSVTDESTVDGIQTKWLPLIRQSFGEYHETPVILVGNKSDGTANNTDKILPIMEANTEVETCVECSARTMKNVSEIFYYAQKAVIYPTRPLYDADTKQLTDRARKALIRVFKICDRDNDGYLSDTELNDFQKLCFGIPLTSTALEDVKRAVSDGCPDGVANDSLMLAGFLYLHLLFIERGRHETTWAVLRKFGYETSLKLSEDYLYPRITIPVGCSTELSPEGVQFVSALFEKYDEDKDGCLSPSELQNLFSVCPVPVITKDNILALETNQRGWLTYNGYMAYWNMTTLINLTQTFEQLAYLGFPVGRSGPGRAGNTLDSIRVTRERKKDLENHGTDRKVFQCLVVGAKDAGKTVFMQSLAGRGMADVAQIGRRHSPFVINRVRVKEESKYLLLREVDVLSPQDALGSGETSADVVAFLYDISNPDSFAFCATVYQKYFYRTKTPCVMIATKVEREEVDQRWEVPPEEFCRQFELPKPIKFSTGNIGQSSSPIFEQLAMMAVYPHLRRVFYLNDSNLLSKITFGAAIVALAGFLVLKNL.

Over 1–601 the chain is Cytoplasmic; that stretch reads MSDDETLADV…LRRVFYLNDS (601 aa). Positions 3-170 constitute a Miro 1 domain; it reads DDETLADVRI…EIFYYAQKAV (168 aa). GTP contacts are provided by residues 16–23, 62–66, and 123–126; these read GDEGCGKT, DLSIK, and NKSD. 2 EF-hand domains span residues 188–223 and 308–343; these read RARK…CFGI and EGVQ…CPVP. Residues Asp201, Asp203, Asp205, Tyr207, Glu212, Asp321, Asp323, Asp325, Cys327, and Glu332 each contribute to the Ca(2+) site. A Miro 2 domain is found at 420–625; the sequence is HGTDRKVFQC…LAGFLVLKNL (206 aa). GTP contacts are provided by residues 433–440, 470–474, and 537–540; these read GAKDAGKT, RVKEE, and TKVE. Residues 602 to 622 traverse the membrane as a helical; Anchor for type IV membrane protein segment; the sequence is NLLSKITFGAAIVALAGFLVL. At 623 to 625 the chain is on the mitochondrial intermembrane side; sequence KNL.

The protein belongs to the mitochondrial Rho GTPase family.

The protein resides in the mitochondrion outer membrane. Functionally, mitochondrial GTPase involved in mitochondrial trafficking. Probably involved in control of anterograde transport of mitochondria and their subcellular distribution. Plays a role in maintaining mitochondrial morphology. This is Mitochondrial Rho GTPase 1 from Caenorhabditis elegans.